Consider the following 243-residue polypeptide: MLRIVKKLWVILFISNISINSFAKNIYDNVDDANYDSTQYYENEGSLLFKMRLGGIFASAKQKGLPTHSSIQAVSVGEVAKNGYGGDASTTIFFNNYLAAELSLGFNVLRTKYTSLAAVAHNYGVDNVKLGKHKPIYMIPATLTGQFHIAPYGGIRPYIGIGYHGSYMLTQATGLKIRNGYNIVGQIGVDFYAKDDTLINMDVRQFFLKPKLEYKPNLVGNKKVTSKVKLNPLIVSIGIGFTF.

The signal sequence occupies residues Met-1 to Ala-23.

This sequence belongs to the OmpW/AlkL family.

Its subcellular location is the cell outer membrane. The chain is Putative outer membrane protein RP075 from Rickettsia prowazekii (strain Madrid E).